The following is a 55-amino-acid chain: MKNNDKKKEVQRKYREEIKKKKQKNEDNKNFIKETIIVVTIIVLFIFFTYTLQGF.

The segment at 1-25 (MKNNDKKKEVQRKYREEIKKKKQKN) is disordered. A helical transmembrane segment spans residues 35 to 55 (TIIVVTIIVLFIFFTYTLQGF).

It localises to the membrane. This is an uncharacterized protein from Bacillus subtilis (strain 168).